Consider the following 468-residue polypeptide: Ribosomal lysine N-methyltransferase 4 (468 aa).

One can recognise an SET domain in the interval 22-302 (EKIGLNDYRH…KGEQLWNTYG (281 aa)). The interval 188–225 (ISNENEKSAAETSIKEDKNGDAAKKNEGSANQDDEKLH) is disordered. Y301 serves as a coordination point for S-adenosyl-L-methionine.

The protein belongs to the class V-like SAM-binding methyltransferase superfamily. Histone-lysine methyltransferase family. SETD6 subfamily.

It is found in the nucleus. Functionally, S-adenosyl-L-methionine-dependent protein-lysine N-methyltransferase that monomethylates 60S ribosomal protein L42 (rpl42) at 'Lys-55'. This Schizosaccharomyces pombe (strain 972 / ATCC 24843) (Fission yeast) protein is Ribosomal lysine N-methyltransferase 4.